Reading from the N-terminus, the 145-residue chain is Deoxyuridine 5'-triphosphate nucleotidohydrolase (145 aa).

Substrate contacts are provided by residues 64–66 (RSG), N77, 81–83 (TID), and M91.

The protein belongs to the dUTPase family. It depends on Mg(2+) as a cofactor.

It carries out the reaction dUTP + H2O = dUMP + diphosphate + H(+). It functions in the pathway pyrimidine metabolism; dUMP biosynthesis; dUMP from dCTP (dUTP route): step 2/2. This enzyme is involved in nucleotide metabolism: it produces dUMP, the immediate precursor of thymidine nucleotides and it decreases the intracellular concentration of dUTP so that uracil cannot be incorporated into DNA. This is Deoxyuridine 5'-triphosphate nucleotidohydrolase from Leptospira borgpetersenii serovar Hardjo-bovis (strain JB197).